The chain runs to 1077 residues: Error-prone DNA polymerase (1077 aa).

It belongs to the DNA polymerase type-C family. DnaE2 subfamily.

The protein resides in the cytoplasm. The enzyme catalyses DNA(n) + a 2'-deoxyribonucleoside 5'-triphosphate = DNA(n+1) + diphosphate. DNA polymerase involved in damage-induced mutagenesis and translesion synthesis (TLS). It is not the major replicative DNA polymerase. This is Error-prone DNA polymerase from Brucella suis biovar 1 (strain 1330).